A 334-amino-acid polypeptide reads, in one-letter code: Malate dehydrogenase, cytoplasmic (334 aa).

S2 carries the N-acetylserine modification. Residues 11–17 (GAAGQIA) and D42 contribute to the NAD(+) site. Substrate contacts are provided by R92 and R98. N105 is a binding site for NAD(+). K110 bears the N6-succinyllysine mark. Residue Q112 coordinates NAD(+). K118 and K121 each carry N6-acetyllysine. 129-131 (VGN) provides a ligand contact to NAD(+). Positions 131 and 162 each coordinate substrate. H187 functions as the Proton acceptor in the catalytic mechanism. Position 214 is an N6-succinyllysine (K214). Position 217 is a phosphoserine (S217). Position 230 is an omega-N-methylarginine (R230). S241 bears the Phosphoserine mark. K298 bears the N6-acetyllysine; alternate mark. Residue K298 is modified to N6-succinyllysine; alternate. Position 309 is a phosphoserine (S309). Residue K318 is modified to N6-succinyllysine. S333 carries the phosphoserine modification.

The protein belongs to the LDH/MDH superfamily. MDH type 2 family. In terms of assembly, homodimer. In terms of processing, ISGylated. Acetylation at Lys-118 dramatically enhances enzymatic activity and promotes adipogenic differentiation.

It localises to the cytoplasm. Its subcellular location is the cytosol. The enzyme catalyses (S)-malate + NAD(+) = oxaloacetate + NADH + H(+). It carries out the reaction (2R)-2-hydroxy-3-(4-hydroxyphenyl)propanoate + NAD(+) = 3-(4-hydroxyphenyl)pyruvate + NADH + H(+). The catalysed reaction is (S)-2-hydroxyglutarate + NAD(+) = 2-oxoglutarate + NADH + H(+). Its function is as follows. Catalyzes the reduction of aromatic alpha-keto acids in the presence of NADH. Plays essential roles in the malate-aspartate shuttle and the tricarboxylic acid cycle, important in mitochondrial NADH supply for oxidative phosphorylation. Catalyzes the reduction of 2-oxoglutarate to 2-hydroxyglutarate, leading to elevated reactive oxygen species (ROS). The chain is Malate dehydrogenase, cytoplasmic (MDH1) from Bos taurus (Bovine).